The chain runs to 437 residues: Triacylglycerol lipase (437 aa).

The region spanning 1–100 (MVSYVVALPE…AELANASLLQ (100 aa)) is the PE domain. A linker region spans residues 101–206 (SEFASGIGNG…GNSPPPLLNS (106 aa)). Residues 207–437 (LLGQTVQYTT…QINQQLGIAA (231 aa)) form a lipase region. Positions 239-241 (HGG) match the Involved in the stabilization of the negatively charged intermediate by the formation of the oxyanion hole motif. Active-site residues include S309, D383, and H413.

This sequence in the N-terminal section; belongs to the mycobacterial PE family. PGRS subfamily. The protein in the C-terminal section; belongs to the 'GDXG' lipolytic enzyme family. As to quaternary structure, forms aggregates via its PE domain. In terms of processing, upon export, the PE domain is removed by proteolytic cleavage. Cleavage occurs at the cell surface and is not required for secretion. Cleaved after Gly-149 by the aspartic protease PecA. May also be cleaved before Leu-98 and after Ala-136.

It is found in the cytoplasm. It localises to the secreted. Its subcellular location is the cell wall. The protein resides in the cell surface. The enzyme catalyses a triacylglycerol + H2O = a diacylglycerol + a fatty acid + H(+). It catalyses the reaction 1,2,3-tri-(9Z-octadecenoyl)-glycerol + H2O = di-(9Z)-octadecenoylglycerol + (9Z)-octadecenoate + H(+). The catalysed reaction is an acetyl ester + H2O = an aliphatic alcohol + acetate + H(+). It carries out the reaction a butanoate ester + H2O = an aliphatic alcohol + butanoate + H(+). The enzyme catalyses a hexanoate ester + H2O = an aliphatic alcohol + hexanoate + H(+). It catalyses the reaction an octanoate ester + H2O = an aliphatic alcohol + octanoate + H(+). The catalysed reaction is a dodecanoate ester + H2O = an aliphatic alcohol + dodecanoate + H(+). It carries out the reaction a tetradecanoate ester + H2O = an aliphatic alcohol + tetradecanoate + H(+). The enzyme catalyses hexadecanoate ester + H2O = an aliphatic alcohol + hexadecanoate + H(+). It catalyses the reaction octadecanoate ester + H2O = an aliphatic alcohol + octadecanoate + H(+). The catalysed reaction is 1-butyrylglycerol + H2O = butanoate + glycerol + H(+). It carries out the reaction 1,2,3-tributanoylglycerol + H2O = dibutanoylglycerol + butanoate + H(+). Its activity is regulated as follows. PE domain down-regulates lipase activity. Cleavage by PecA does not affect surface localization and lipase activity. With respect to regulation, inhibited by diethyl-p-nitrophenyl phosphate (E-600) at 0.5 uM, by phenylmethanesulfonyl fluoride at 5 mM and by polyethylene glycol sorbitan monolaurate (Tween 20). Also inhibited by CaCl(2), CoCl(2), MnCl(2), ZnCl(2) and MgCl(2). Inhibited by several hydrazides compounds. Stimulated slightly by SDS at concentrations up to 2 mM, above which the activity is severely inhibited. In terms of biological role, catalyzes the hydrolysis of both intracellular and extracellular triacylglycerol (TAG). In vitro, can also hydrolyze p-nitrophenyl (pNP) esters with various chain lengths, including pNP-acetate (C2), pNP-butyrate (C4), pNP-caproate (C6), pNP-caprylate (C8), pNP-laurate (C12), pNP-myristate (C14), pNP-palmitate (C16) and pNP-stearate (C18). Also hydrolyzes monobutyrin, tributyrin and trioctanoin. Overexpression results in increase of virulence characterized by reduced survival of infected mouse and increased burden of bacilli in the lungs. Hydrolyzes internal or host-derived TAG depending on its localization. Its function is as follows. Hydrolyzes TAG that accumulates within mycobacterial intracytosolic lipid inclusions (ILI). Probably responsible for the utilization of stored long-chain TAG during the dormancy and reactivation stages of the pathogen. Hydrolyzes host-derived TAG. The polypeptide is Triacylglycerol lipase (Mycobacterium tuberculosis (strain ATCC 25618 / H37Rv)).